Consider the following 637-residue polypeptide: Chaperone protein HtpG (637 aa).

Positions 1–345 (MSQQETHGFQ…SNDLPLNVSR (345 aa)) are a; substrate-binding. Residues 346-562 (EILQDNQVTT…EGEMSTQMIK (217 aa)) form a b region. Residues 563–637 (LMQAAGQPVP…TNQMLLASVK (75 aa)) form a c region.

Belongs to the heat shock protein 90 family. As to quaternary structure, homodimer.

Its subcellular location is the cytoplasm. Functionally, molecular chaperone. Has ATPase activity. In Shewanella frigidimarina (strain NCIMB 400), this protein is Chaperone protein HtpG.